Reading from the N-terminus, the 147-residue chain is Nucleoside diphosphate kinase (147 aa).

Positions 9, 57, 85, 91, 102, and 112 each coordinate ATP. Catalysis depends on His115, which acts as the Pros-phosphohistidine intermediate.

This sequence belongs to the NDK family. In terms of assembly, homotetramer. Mg(2+) serves as cofactor.

It is found in the cytoplasm. The catalysed reaction is a 2'-deoxyribonucleoside 5'-diphosphate + ATP = a 2'-deoxyribonucleoside 5'-triphosphate + ADP. It carries out the reaction a ribonucleoside 5'-diphosphate + ATP = a ribonucleoside 5'-triphosphate + ADP. In terms of biological role, major role in the synthesis of nucleoside triphosphates other than ATP. The ATP gamma phosphate is transferred to the NDP beta phosphate via a ping-pong mechanism, using a phosphorylated active-site intermediate. This chain is Nucleoside diphosphate kinase, found in Listeria welshimeri serovar 6b (strain ATCC 35897 / DSM 20650 / CCUG 15529 / CIP 8149 / NCTC 11857 / SLCC 5334 / V8).